Reading from the N-terminus, the 394-residue chain is Phosphoglycerate kinase (394 aa).

Substrate is bound by residues 21 to 23, R36, 59 to 62, R118, and R151; these read DFN and HLGR. Phosphoserine is present on S183. An ATP-binding site is contributed by K201. T299 bears the Phosphothreonine mark. Residues N316, E323, and 350-353 each bind ATP; that span reads GGDS.

It belongs to the phosphoglycerate kinase family. In terms of assembly, monomer.

Its subcellular location is the cytoplasm. The catalysed reaction is (2R)-3-phosphoglycerate + ATP = (2R)-3-phospho-glyceroyl phosphate + ADP. The protein operates within carbohydrate degradation; glycolysis; pyruvate from D-glyceraldehyde 3-phosphate: step 2/5. This is Phosphoglycerate kinase from Geobacillus stearothermophilus (Bacillus stearothermophilus).